The primary structure comprises 448 residues: tRNA modification GTPase MnmE (448 aa).

(6S)-5-formyl-5,6,7,8-tetrahydrofolate-binding residues include R21, E80, and K119. In terms of domain architecture, TrmE-type G spans 215-370 (GVKLAIVGRP…LSEEILKKVG (156 aa)). N225 is a K(+) binding site. GTP contacts are provided by residues 225–230 (NVGKSS), 244–250 (TDIAGTT), and 269–272 (DTAG). Residue S229 coordinates Mg(2+). K(+)-binding residues include T244, I246, and T249. Position 250 (T250) interacts with Mg(2+). Residue K448 participates in (6S)-5-formyl-5,6,7,8-tetrahydrofolate binding.

This sequence belongs to the TRAFAC class TrmE-Era-EngA-EngB-Septin-like GTPase superfamily. TrmE GTPase family. As to quaternary structure, homodimer. Heterotetramer of two MnmE and two MnmG subunits. The cofactor is K(+).

The protein resides in the cytoplasm. Its function is as follows. Exhibits a very high intrinsic GTPase hydrolysis rate. Involved in the addition of a carboxymethylaminomethyl (cmnm) group at the wobble position (U34) of certain tRNAs, forming tRNA-cmnm(5)s(2)U34. This Aquifex aeolicus (strain VF5) protein is tRNA modification GTPase MnmE.